Consider the following 177-residue polypeptide: Large ribosomal subunit protein uL6 (177 aa).

Belongs to the universal ribosomal protein uL6 family. Part of the 50S ribosomal subunit.

This protein binds to the 23S rRNA, and is important in its secondary structure. It is located near the subunit interface in the base of the L7/L12 stalk, and near the tRNA binding site of the peptidyltransferase center. The protein is Large ribosomal subunit protein uL6 of Novosphingobium aromaticivorans (strain ATCC 700278 / DSM 12444 / CCUG 56034 / CIP 105152 / NBRC 16084 / F199).